The primary structure comprises 663 residues: Rho GTPase-activating protein 18 (663 aa).

A disordered region spans residues 15–37 (YHPSGKDQTVGNSHAKAGEEATS). A phosphoserine mark is found at S66 and S69. Position 158 is a phosphothreonine (T158). 2 disordered regions span residues 179 to 227 (RESK…PAPE) and 243 to 277 (QKES…TRIG). 2 stretches are compositionally biased toward basic and acidic residues: residues 197-219 (NENK…KLIP) and 245-258 (ESSK…KGDD). A Phosphoserine modification is found at S263. A Rho-GAP domain is found at 324-523 (VPLTALLEQD…LLIKYQKLLW (200 aa)). Residue S610 is modified to Phosphoserine.

In terms of assembly, interacts with MPHOSPH6.

The protein localises to the cytoplasm. Functionally, rho GTPase activating protein that suppresses F-actin polymerization by inhibiting Rho. Rho GTPase activating proteins act by converting Rho-type GTPases to an inactive GDP-bound state. Plays a key role in tissue tension and 3D tissue shape by regulating cortical actomyosin network formation. Acts downstream of YAP1 and inhibits actin polymerization, which in turn reduces nuclear localization of YAP1. Regulates cell shape, spreading, and migration. The polypeptide is Rho GTPase-activating protein 18 (Homo sapiens (Human)).